We begin with the raw amino-acid sequence, 467 residues long: 3-isopropylmalate dehydratase large subunit (467 aa).

The [4Fe-4S] cluster site is built by C349, C409, and C412.

The protein belongs to the aconitase/IPM isomerase family. LeuC type 1 subfamily. As to quaternary structure, heterodimer of LeuC and LeuD. Requires [4Fe-4S] cluster as cofactor.

The catalysed reaction is (2R,3S)-3-isopropylmalate = (2S)-2-isopropylmalate. It participates in amino-acid biosynthesis; L-leucine biosynthesis; L-leucine from 3-methyl-2-oxobutanoate: step 2/4. In terms of biological role, catalyzes the isomerization between 2-isopropylmalate and 3-isopropylmalate, via the formation of 2-isopropylmaleate. In Ruegeria sp. (strain TM1040) (Silicibacter sp.), this protein is 3-isopropylmalate dehydratase large subunit.